Reading from the N-terminus, the 345-residue chain is MFTTHPQGRSYRSSVPHHHLRQPEIQNSYDQHANNPPRQTRRRPLADMIGHPIHFLTGQFAGQTIRAELDEIQKADLGRKYARVDRRPLDPPPVVRLRYFDIREDDVDQERGTEIKNYDEIQTIGLMSTVDLFPVPNESWTSRSPTQTSFSSSSPTLSNGNENFMFSSPQTSSPTAAQSQASTPNSPSSNDIIHYVGNHAITESSKVTSSLVGATFVQPAIVDYEGKKTIIFVFSDLAVKIEGTFLLRYRVFDIYSRPRDREDLLVQAECYGGPFRVYSTKEFPGLQASTDLTKHLARWGVRLNIRETERKRRKKGEIGSPLDDPKSKRKRTSLGSEDDEASDED.

Polar residues-rich tracts occupy residues 1–13 (MFTT…SYRS) and 24–38 (EIQN…NPPR). 3 disordered regions span residues 1 to 43 (MFTT…TRRR), 138 to 189 (ESWT…SPSS), and 310 to 345 (RKRR…SDED). In terms of domain architecture, Velvet spans 62–306 (GQTIRAELDE…ARWGVRLNIR (245 aa)). 2 stretches are compositionally biased toward low complexity: residues 141-158 (TSRS…PTLS) and 167-184 (SSPQ…ASTP). Acidic residues predominate over residues 336 to 345 (SEDDEASDED).

It belongs to the velvet family.

It localises to the nucleus. Its function is as follows. Velvet-domain-containing protein that probably acts as a positive regulator of sexual development. The protein is Probable velvet family sexual development regulator LACBIDRAFT_317102 of Laccaria bicolor (strain S238N-H82 / ATCC MYA-4686) (Bicoloured deceiver).